Here is a 34-residue protein sequence, read N- to C-terminus: Potassium channel toxin alpha-KTx 6.17 (34 aa).

4 disulfide bridges follow: cysteine 3/cysteine 24, cysteine 9/cysteine 29, cysteine 13/cysteine 31, and cysteine 19/cysteine 34.

The protein belongs to the short scorpion toxin superfamily. Potassium channel inhibitor family. Alpha-KTx 06 subfamily. In terms of tissue distribution, expressed by the venom gland.

The protein localises to the secreted. In terms of biological role, this toxin reversibly blocks Shaker B potassium-channels (expressed in insect Sf9 cells) with a Kd of 96.6 nM, and presents an even better affinity toward hKv1.3 (KCNA3), blocking it with a Kd of 17.7 nM. The sequence is that of Potassium channel toxin alpha-KTx 6.17 from Opisthacanthus cayaporum (South American scorpion).